A 133-amino-acid polypeptide reads, in one-letter code: MKKNITKTIIASTVIAAGLLTQTNDAKAFFSYEWKGLEIAKNLADQAKKDDERIDKLMKESDKNLTPYKAETVNDLYLIVKKLSQGDVKKAVVRIKDGGPRDYYTFDLTRPLEENRKNIKVVKNGEIDSIYWD.

An N-terminal signal peptide occupies residues 1–28; that stretch reads MKKNITKTIIASTVIAAGLLTQTNDAKA.

It belongs to the CHIPS/FLIPr family.

Its subcellular location is the secreted. Its function is as follows. May be involved in countering the first line of host defense mechanisms. Impairs the leukocyte response to FPRL1 agonists by binding directly to host FPRL1. This is FPRL1 inhibitory protein (flr) from Staphylococcus aureus (strain Mu50 / ATCC 700699).